A 319-amino-acid polypeptide reads, in one-letter code: HTH-type transcriptional regulator YidZ (319 aa).

Residues 8–65 (LDLNLLLCLQLLMQERSVTKAAKRMNVTPSAVSKSLAKLRAWFDDPLFVNTPLGLAPT) enclose the HTH lysR-type domain. Residues 25–44 (VTKAAKRMNVTPSAVSKSLA) constitute a DNA-binding region (H-T-H motif).

It belongs to the LysR transcriptional regulatory family.

Its function is as follows. Involved in anaerobic NO protection. This Salmonella heidelberg (strain SL476) protein is HTH-type transcriptional regulator YidZ.